Consider the following 152-residue polypeptide: Ribosome maturation factor RimP (152 aa).

It belongs to the RimP family.

Its subcellular location is the cytoplasm. Required for maturation of 30S ribosomal subunits. This is Ribosome maturation factor RimP from Shigella boydii serotype 4 (strain Sb227).